A 770-amino-acid chain; its full sequence is Probable methyltransferase PMT25 (770 aa).

At 1–17 (MAMGKYSRVDGKKSSSY) the chain is on the cytoplasmic side. A helical; Signal-anchor for type II membrane protein transmembrane segment spans residues 18–38 (GLTITIVLLLSLCLVGTWMFM). Topologically, residues 39-770 (SSWSAPADSA…ETETIKSAIA (732 aa)) are lumenal. A disordered region spans residues 44 to 238 (PADSAGYSST…SSISKDQSSY (195 aa)). Over residues 55–79 (TAKDVSKNDLRKEEGDRDPKNFSDE) the composition is skewed to basic and acidic residues. 2 N-linked (GlcNAc...) asparagine glycosylation sites follow: N75 and N107. Positions 92–109 (QVKTDSENSAEGNQVNES) are enriched in polar residues. 2 stretches are compositionally biased toward basic and acidic residues: residues 110-124 (SGEK…KESD) and 131-177 (DGEK…KAEE). N163 and N178 each carry an N-linked (GlcNAc...) asparagine glycan. 2 stretches are compositionally biased toward polar residues: residues 205–220 (ESST…LVES) and 227–238 (QQSSISKDQSSY). N-linked (GlcNAc...) asparagine glycans are attached at residues N244 and N363.

It belongs to the methyltransferase superfamily.

The protein localises to the golgi apparatus membrane. This is Probable methyltransferase PMT25 from Arabidopsis thaliana (Mouse-ear cress).